The sequence spans 243 residues: Carboxy-S-adenosyl-L-methionine synthase (243 aa).

S-adenosyl-L-methionine is bound by residues Tyr-40, Gly-65–Ser-67, Asp-90–Asn-91, Asp-118–Ile-119, Asn-133, and Arg-200.

The protein belongs to the class I-like SAM-binding methyltransferase superfamily. Cx-SAM synthase family. In terms of assembly, homodimer.

The catalysed reaction is prephenate + S-adenosyl-L-methionine = carboxy-S-adenosyl-L-methionine + 3-phenylpyruvate + H2O. Catalyzes the conversion of S-adenosyl-L-methionine (SAM) to carboxy-S-adenosyl-L-methionine (Cx-SAM). In Shewanella amazonensis (strain ATCC BAA-1098 / SB2B), this protein is Carboxy-S-adenosyl-L-methionine synthase.